The chain runs to 210 residues: Glutathione S-transferase P (210 aa).

One can recognise a GST N-terminal domain in the interval 2–81; the sequence is PPYTVVYFPV…HLGRTLGLYG (80 aa). Phosphotyrosine; by EGFR is present on Tyr4. Residues Tyr8, Arg14, Trp39, Lys45, and 52–53 each bind glutathione; that span reads QL. Residue Thr62 is modified to Phosphothreonine. 65 to 66 is a glutathione binding site; it reads QS. The GST C-terminal domain maps to 83-204; that stretch reads DQREAALVDM…ASPEHVNLPI (122 aa). N6-succinyllysine occurs at positions 103 and 116. Residue Lys128 is modified to N6-acetyllysine.

It belongs to the GST superfamily. Pi family. In terms of assembly, homodimer. Interacts with CDK5.

The protein localises to the cytoplasm. Its subcellular location is the mitochondrion. It localises to the nucleus. The enzyme catalyses RX + glutathione = an S-substituted glutathione + a halide anion + H(+). It catalyses the reaction prostaglandin J2 + glutathione = prostaglandin J2-S-(R)-glutathione. The catalysed reaction is prostaglandin J2 + glutathione = prostaglandin J2-S-(S)-glutathione. It carries out the reaction prostaglandin A2 + glutathione = prostaglandin A2-S-(S)-glutathione. The enzyme catalyses 11(S)-hydroxy-14(S),15(S)-epoxy-(5Z,8Z,12E)-eicosatrienoate + glutathione = (11S,15S)-dihydroxy-14(R)-S-glutathionyl-(5Z,8Z,12E)-eicosatrienoate. In terms of biological role, conjugation of reduced glutathione to a wide number of exogenous and endogenous hydrophobic electrophiles. Involved in the formation of glutathione conjugates of both prostaglandin A2 (PGA2) and prostaglandin J2 (PGJ2). Participates in the formation of novel hepoxilin regioisomers. Negatively regulates CDK5 activity via p25/p35 translocation to prevent neurodegeneration. This chain is Glutathione S-transferase P (GSTP1), found in Pongo abelii (Sumatran orangutan).